The following is a 434-amino-acid chain: Enolase (434 aa).

Glutamine 166 contacts (2R)-2-phosphoglycerate. Glutamate 208 serves as the catalytic Proton donor. Positions 245, 290, and 317 each coordinate Mg(2+). Positions 342, 371, 372, and 393 each coordinate (2R)-2-phosphoglycerate. Residue lysine 342 is the Proton acceptor of the active site.

This sequence belongs to the enolase family. Mg(2+) serves as cofactor.

Its subcellular location is the cytoplasm. The protein localises to the secreted. It is found in the cell surface. The catalysed reaction is (2R)-2-phosphoglycerate = phosphoenolpyruvate + H2O. Its pathway is carbohydrate degradation; glycolysis; pyruvate from D-glyceraldehyde 3-phosphate: step 4/5. Its function is as follows. Catalyzes the reversible conversion of 2-phosphoglycerate (2-PG) into phosphoenolpyruvate (PEP). It is essential for the degradation of carbohydrates via glycolysis. This is Enolase from Caldicellulosiruptor bescii (strain ATCC BAA-1888 / DSM 6725 / KCTC 15123 / Z-1320) (Anaerocellum thermophilum).